The sequence spans 119 residues: Ribonuclease P protein component (119 aa).

The protein belongs to the RnpA family. Consists of a catalytic RNA component (M1 or rnpB) and a protein subunit.

The enzyme catalyses Endonucleolytic cleavage of RNA, removing 5'-extranucleotides from tRNA precursor.. Its function is as follows. RNaseP catalyzes the removal of the 5'-leader sequence from pre-tRNA to produce the mature 5'-terminus. It can also cleave other RNA substrates such as 4.5S RNA. The protein component plays an auxiliary but essential role in vivo by binding to the 5'-leader sequence and broadening the substrate specificity of the ribozyme. This chain is Ribonuclease P protein component, found in Haemophilus influenzae (strain 86-028NP).